Consider the following 479-residue polypeptide: Aspartyl/glutamyl-tRNA(Asn/Gln) amidotransferase subunit B (479 aa).

Belongs to the GatB/GatE family. GatB subfamily. Heterotrimer of A, B and C subunits.

It carries out the reaction L-glutamyl-tRNA(Gln) + L-glutamine + ATP + H2O = L-glutaminyl-tRNA(Gln) + L-glutamate + ADP + phosphate + H(+). The catalysed reaction is L-aspartyl-tRNA(Asn) + L-glutamine + ATP + H2O = L-asparaginyl-tRNA(Asn) + L-glutamate + ADP + phosphate + 2 H(+). Its function is as follows. Allows the formation of correctly charged Asn-tRNA(Asn) or Gln-tRNA(Gln) through the transamidation of misacylated Asp-tRNA(Asn) or Glu-tRNA(Gln) in organisms which lack either or both of asparaginyl-tRNA or glutaminyl-tRNA synthetases. The reaction takes place in the presence of glutamine and ATP through an activated phospho-Asp-tRNA(Asn) or phospho-Glu-tRNA(Gln). This is Aspartyl/glutamyl-tRNA(Asn/Gln) amidotransferase subunit B from Streptococcus uberis (strain ATCC BAA-854 / 0140J).